The chain runs to 149 residues: UPF0260 protein Psyr_1567 (149 aa).

Belongs to the UPF0260 family.

This chain is UPF0260 protein Psyr_1567, found in Pseudomonas syringae pv. syringae (strain B728a).